Here is a 493-residue protein sequence, read N- to C-terminus: Galactose-1-phosphate uridylyltransferase (493 aa).

It belongs to the galactose-1-phosphate uridylyltransferase type 2 family.

It is found in the cytoplasm. It catalyses the reaction alpha-D-galactose 1-phosphate + UDP-alpha-D-glucose = alpha-D-glucose 1-phosphate + UDP-alpha-D-galactose. The protein operates within carbohydrate metabolism; galactose metabolism. The sequence is that of Galactose-1-phosphate uridylyltransferase from Streptococcus salivarius.